Here is a 957-residue protein sequence, read N- to C-terminus: Exoribonuclease II, mitochondrial (957 aa).

A mitochondrion-targeting transit peptide spans 1-54 (MNYRQLFLLQNVNLESNYLLKRVCLSLKLSPCKLTRKFHHACPSSSKVLKYFRI). Residues 503–843 (RVDLRHLKAF…FTHHQIQSVL (341 aa)) form the RNB domain.

This sequence belongs to the RNR ribonuclease family.

The protein localises to the mitochondrion. The catalysed reaction is Exonucleolytic cleavage in the 3'- to 5'-direction to yield nucleoside 5'-phosphates.. Required for intron-independent turnover and processing of mitochondrial RNA. Participates in 3'-mtRNA processing where it hydrolyzes single-stranded RNA or partially double-stranded RNA with 3'-single-stranded tails. In Schizosaccharomyces pombe (strain 972 / ATCC 24843) (Fission yeast), this protein is Exoribonuclease II, mitochondrial (rpm1).